Reading from the N-terminus, the 271-residue chain is Formamidopyrimidine-DNA glycosylase (271 aa).

Pro2 serves as the catalytic Schiff-base intermediate with DNA. Glu3 acts as the Proton donor in catalysis. The Proton donor; for beta-elimination activity role is filled by Lys58. DNA-binding residues include Arg110 and Arg152. Residues 237-271 form an FPG-type zinc finger; sequence AVYGQTGKPCTVCGTPIARIRLGNRSTWFCPVCQK. Arg261 serves as the catalytic Proton donor; for delta-elimination activity.

This sequence belongs to the FPG family. As to quaternary structure, monomer. Zn(2+) is required as a cofactor.

The catalysed reaction is Hydrolysis of DNA containing ring-opened 7-methylguanine residues, releasing 2,6-diamino-4-hydroxy-5-(N-methyl)formamidopyrimidine.. The enzyme catalyses 2'-deoxyribonucleotide-(2'-deoxyribose 5'-phosphate)-2'-deoxyribonucleotide-DNA = a 3'-end 2'-deoxyribonucleotide-(2,3-dehydro-2,3-deoxyribose 5'-phosphate)-DNA + a 5'-end 5'-phospho-2'-deoxyribonucleoside-DNA + H(+). Its function is as follows. Involved in base excision repair of DNA damaged by oxidation or by mutagenic agents. Acts as a DNA glycosylase that recognizes and removes damaged bases. Has a preference for oxidized purines, such as 7,8-dihydro-8-oxoguanine (8-oxoG). Has AP (apurinic/apyrimidinic) lyase activity and introduces nicks in the DNA strand. Cleaves the DNA backbone by beta-delta elimination to generate a single-strand break at the site of the removed base with both 3'- and 5'-phosphates. This chain is Formamidopyrimidine-DNA glycosylase, found in Geobacter sulfurreducens (strain ATCC 51573 / DSM 12127 / PCA).